The following is a 201-amino-acid chain: Ribosomal RNA large subunit methyltransferase E (201 aa).

The S-adenosyl-L-methionine site is built by Gly49, Trp51, Asp69, Asp90, and Asp113. The Proton acceptor role is filled by Lys153.

Belongs to the class I-like SAM-binding methyltransferase superfamily. RNA methyltransferase RlmE family.

The protein localises to the cytoplasm. It carries out the reaction uridine(2552) in 23S rRNA + S-adenosyl-L-methionine = 2'-O-methyluridine(2552) in 23S rRNA + S-adenosyl-L-homocysteine + H(+). In terms of biological role, specifically methylates the uridine in position 2552 of 23S rRNA at the 2'-O position of the ribose in the fully assembled 50S ribosomal subunit. The sequence is that of Ribosomal RNA large subunit methyltransferase E from Desulfotalea psychrophila (strain LSv54 / DSM 12343).